The primary structure comprises 547 residues: 4-coumarate-CoA ligase 1 (547 aa).

ATP contacts are provided by residues 190 to 194, His238, 310 to 312, 332 to 333, Thr337, Asp421, Arg436, and Lys527; these read SSGTT, AAP, and QG. Residues 263-332 form an SBD1 region; the sequence is EIVRLMELVE…EKLPNAKLGQ (70 aa). The tract at residues 333-400 is SBD2; that stretch reads GYGMTEAGPV…IRGNQIMKGY (68 aa).

It belongs to the ATP-dependent AMP-binding enzyme family. As to expression, mostly expressed in stems, and, to a lower extent, in bulbs.

It carries out the reaction (E)-4-coumarate + ATP + CoA = (E)-4-coumaroyl-CoA + AMP + diphosphate. Its pathway is phytoalexin biosynthesis; 3,4',5-trihydroxystilbene biosynthesis; 3,4',5-trihydroxystilbene from trans-4-coumarate: step 1/2. Functionally, produces CoA thioesters of a variety of hydroxy- and methoxy-substituted cinnamic acids, which are used to synthesize several phenylpropanoid-derived compounds, including anthocyanins, flavonoids, isoflavonoids, coumarins, lignin, suberin and wall-bound phenolics. The polypeptide is 4-coumarate-CoA ligase 1 (Narcissus pseudonarcissus (Daffodil)).